A 104-amino-acid chain; its full sequence is NADH-quinone oxidoreductase subunit K (104 aa).

3 consecutive transmembrane segments (helical) span residues 4–24, 31–51, and 67–87; these read VPAS…LFGA, VIVL…LVAF, and LFTM…LIAL.

Belongs to the complex I subunit 4L family. NDH-1 is composed of 14 different subunits. Subunits NuoA, H, J, K, L, M, N constitute the membrane sector of the complex.

It localises to the cell membrane. It carries out the reaction a quinone + NADH + 5 H(+)(in) = a quinol + NAD(+) + 4 H(+)(out). In terms of biological role, NDH-1 shuttles electrons from NADH, via FMN and iron-sulfur (Fe-S) centers, to quinones in the respiratory chain. The immediate electron acceptor for the enzyme in this species is believed to be a menaquinone. Couples the redox reaction to proton translocation (for every two electrons transferred, four hydrogen ions are translocated across the cytoplasmic membrane), and thus conserves the redox energy in a proton gradient. This chain is NADH-quinone oxidoreductase subunit K, found in Bacillus cereus (strain AH820).